Consider the following 518-residue polypeptide: Nuclear receptor ROR-gamma (518 aa).

Positions 1–30 (MDRAPQRQHQASRELLAAKKTHTSQIEVIP) are modulating. 2 NR C4-type zinc fingers span residues 31–51 (CKIC…CEGC) and 67–91 (CTRQ…LQKC). Positions 31 to 96 (CKICGDKSSG…RLQKCLALGM (66 aa)) form a DNA-binding region, nuclear receptor. Disordered regions lie at residues 105-183 (RMSK…SGSG) and 238-258 (HPGL…SFRS). Over residues 109–118 (KQRDSLHAEV) the composition is skewed to basic and acidic residues. Residues 119–130 (QKQLQQRQQQQQ) show a composition bias toward low complexity. The NR LBD domain maps to 269 to 508 (EIEHLVQSVC…PPLYKELFST (240 aa)). The AF-2 motif lies at 501-506 (LYKELF).

This sequence belongs to the nuclear hormone receptor family. NR1 subfamily. In terms of assembly, interacts (via AF-2 motif) with the coactivators NCOA1, NCOA2 and PPARGC1A (via LXXLL motif). Interacts with the corepressor NCOR1. Interacts with CRY1. Interacts (via AF-2 motif) with PROX1. Interacts with FOXP3. Interacts with NR0B2.

The protein resides in the nucleus. In terms of biological role, nuclear receptor that binds DNA as a monomer to ROR response elements (RORE) containing a single core motif half-site 5'-AGGTCA-3' preceded by a short A-T-rich sequence. Key regulator of cellular differentiation, immunity, peripheral circadian rhythm as well as lipid, steroid, xenobiotics and glucose metabolism. Considered to have intrinsic transcriptional activity, have some natural ligands like oxysterols that act as agonists (25-hydroxycholesterol) or inverse agonists (7-oxygenated sterols), enhancing or repressing the transcriptional activity, respectively. Recruits distinct combinations of cofactors to target gene regulatory regions to modulate their transcriptional expression, depending on the tissue, time and promoter contexts. Regulates the circadian expression of clock genes such as CRY1, BMAL1 and NR1D1 in peripheral tissues and in a tissue-selective manner. Competes with NR1D1 for binding to their shared DNA response element on some clock genes such as BMAL1, CRY1 and NR1D1 itself, resulting in NR1D1-mediated repression or RORC-mediated activation of the expression, leading to the circadian pattern of clock genes expression. Therefore influences the period length and stability of the clock. Involved in the regulation of the rhythmic expression of genes involved in glucose and lipid metabolism, including PLIN2 and AVPR1A. Negative regulator of adipocyte differentiation through the regulation of early phase genes expression, such as MMP3. Controls adipogenesis as well as adipocyte size and modulates insulin sensitivity in obesity. In liver, has specific and redundant functions with RORA as positive or negative modulator of expression of genes encoding phase I and Phase II proteins involved in the metabolism of lipids, steroids and xenobiotics, such as SULT1E1. Also plays a role in the regulation of hepatocyte glucose metabolism through the regulation of G6PC1 and PCK1. Essential for thymopoiesis and the development of several secondary lymphoid tissues, including lymph nodes and Peyer's patches. Required for the generation of LTi (lymphoid tissue inducer) cells. Regulates thymocyte survival through DNA-binding on ROREs of target gene promoter regions and recruitment of coactivaros via the AF-2. Also plays a key role, downstream of IL6 and TGFB and synergistically with RORA, for lineage specification of uncommitted CD4(+) T-helper (T(H)) cells into T(H)17 cells, antagonizing the T(H)1 program. Probably regulates IL17 and IL17F expression on T(H) by binding to the essential enhancer conserved non-coding sequence 2 (CNS2) in the IL17-IL17F locus. May also play a role in the pre-TCR activation cascade leading to the maturation of alpha/beta T-cells and may participate in the regulation of DNA accessibility in the TCR-J(alpha) locus. Regulates the rhythmic expression of PROX1 and promotes its nuclear localization. Plays an indispensable role in the induction of IFN-gamma dependent anti-mycobacterial systemic immunity. This chain is Nuclear receptor ROR-gamma (RORC), found in Pongo abelii (Sumatran orangutan).